The primary structure comprises 1024 residues: Multidrug resistance protein MdtC (1024 aa).

Transmembrane regions (helical) follow at residues 12 to 32 (VATT…FSLL), 333 to 353 (EVER…FIFL), 360 to 380 (LIPA…MYLC), 387 to 407 (LSLM…IVVL), 435 to 455 (VLSM…MAGL), 469 to 489 (VAIG…CAWL), 528 to 548 (WVMV…ISIP), 853 to 873 (LWLI…LYES), 875 to 895 (VHPL…LLAL), 897 to 917 (LFDA…IGIV), 953 to 973 (PIIM…LSSG), and 984 to 1004 (ITIV…TPVI).

Belongs to the resistance-nodulation-cell division (RND) (TC 2.A.6) family. MdtC subfamily. Part of a tripartite efflux system composed of MdtA, MdtB and MdtC. MdtC forms a heteromultimer with MdtB.

It localises to the cell inner membrane. The polypeptide is Multidrug resistance protein MdtC (Yersinia pestis bv. Antiqua (strain Antiqua)).